Reading from the N-terminus, the 312-residue chain is MKVTLLGASGGIGQPLSLLLKLHLPAESDLSLYDVAPVTPGVAKDISHIPTSVEVEGFGGDDPSEALKGADIVLICAGVARKPGMTRADLFNVNAGIIQNLVEKVAQVCPQACVCIITNPVNSIIPIAAEVLKKAGVYDKRKLFGITTLDTIRSEKFIVQAKNIEINRNDISVIGGHSGVTILPLLSQIPHVEFTEQELKDLTHRIQNAGTEVVEAKAGAGSATLSMAYAAMRFVVSMARALNGEVITECAYIEGDGKFARFFAQPVRLGKNGVEEILPLGTLSAFEQQALEAMLPTLQTDIDNGVKFVTGE.

Residues G7 to G13 and D34 contribute to the NAD(+) site. Positions 81 and 87 each coordinate substrate. NAD(+) contacts are provided by residues N94 and I117–N119. Substrate is bound by residues N119 and R153. H177 acts as the Proton acceptor in catalysis. Position 227 (M227) interacts with NAD(+).

The protein belongs to the LDH/MDH superfamily. MDH type 1 family. As to quaternary structure, homodimer.

The enzyme catalyses (S)-malate + NAD(+) = oxaloacetate + NADH + H(+). Functionally, catalyzes the reversible oxidation of malate to oxaloacetate. The polypeptide is Malate dehydrogenase (Actinobacillus succinogenes (strain ATCC 55618 / DSM 22257 / CCUG 43843 / 130Z)).